The following is a 132-amino-acid chain: Fatty acid-binding protein, intestinal (132 aa).

Ala2 carries the post-translational modification N-acetylalanine. 2 residues coordinate hexadecanoate: Trp83 and Arg107. 2 residues coordinate tetradecanoate: Trp83 and Arg107.

It belongs to the calycin superfamily. Fatty-acid binding protein (FABP) family.

The protein resides in the cytoplasm. FABPs are thought to play a role in the intracellular transport of long-chain fatty acids and their acyl-CoA esters. In Xenopus laevis (African clawed frog), this protein is Fatty acid-binding protein, intestinal (fabp2).